The following is a 257-amino-acid chain: Acyl-[acyl-carrier-protein]--UDP-N-acetylglucosamine O-acyltransferase (257 aa).

Belongs to the transferase hexapeptide repeat family. LpxA subfamily. In terms of assembly, homotrimer.

Its subcellular location is the cytoplasm. It carries out the reaction a (3R)-hydroxyacyl-[ACP] + UDP-N-acetyl-alpha-D-glucosamine = a UDP-3-O-[(3R)-3-hydroxyacyl]-N-acetyl-alpha-D-glucosamine + holo-[ACP]. Its pathway is glycolipid biosynthesis; lipid IV(A) biosynthesis; lipid IV(A) from (3R)-3-hydroxytetradecanoyl-[acyl-carrier-protein] and UDP-N-acetyl-alpha-D-glucosamine: step 1/6. Its function is as follows. Involved in the biosynthesis of lipid A, a phosphorylated glycolipid that anchors the lipopolysaccharide to the outer membrane of the cell. This chain is Acyl-[acyl-carrier-protein]--UDP-N-acetylglucosamine O-acyltransferase, found in Anaeromyxobacter dehalogenans (strain 2CP-1 / ATCC BAA-258).